Consider the following 329-residue polypeptide: Methionyl-tRNA formyltransferase (329 aa).

Serine 118 to proline 121 contributes to the (6S)-5,6,7,8-tetrahydrofolate binding site.

Belongs to the Fmt family.

It carries out the reaction L-methionyl-tRNA(fMet) + (6R)-10-formyltetrahydrofolate = N-formyl-L-methionyl-tRNA(fMet) + (6S)-5,6,7,8-tetrahydrofolate + H(+). Functionally, attaches a formyl group to the free amino group of methionyl-tRNA(fMet). The formyl group appears to play a dual role in the initiator identity of N-formylmethionyl-tRNA by promoting its recognition by IF2 and preventing the misappropriation of this tRNA by the elongation apparatus. The sequence is that of Methionyl-tRNA formyltransferase from Corynebacterium urealyticum (strain ATCC 43042 / DSM 7109).